Reading from the N-terminus, the 300-residue chain is 4-hydroxy-tetrahydrodipicolinate synthase (300 aa).

Thr46 contributes to the pyruvate binding site. Tyr134 functions as the Proton donor/acceptor in the catalytic mechanism. The active-site Schiff-base intermediate with substrate is the Lys162. Position 207 (Ile207) interacts with pyruvate.

It belongs to the DapA family. In terms of assembly, homotetramer; dimer of dimers.

The protein localises to the cytoplasm. The enzyme catalyses L-aspartate 4-semialdehyde + pyruvate = (2S,4S)-4-hydroxy-2,3,4,5-tetrahydrodipicolinate + H2O + H(+). It participates in amino-acid biosynthesis; L-lysine biosynthesis via DAP pathway; (S)-tetrahydrodipicolinate from L-aspartate: step 3/4. Catalyzes the condensation of (S)-aspartate-beta-semialdehyde [(S)-ASA] and pyruvate to 4-hydroxy-tetrahydrodipicolinate (HTPA). The sequence is that of 4-hydroxy-tetrahydrodipicolinate synthase from Protochlamydia amoebophila (strain UWE25).